Reading from the N-terminus, the 396-residue chain is Phosphoglycerate kinase (396 aa).

Residues 19–21 (DFN), Arg35, 58–61 (HLGR), Arg117, and Arg150 contribute to the substrate site. ATP-binding positions include Lys201, Glu323, and 349 to 352 (GGDT).

This sequence belongs to the phosphoglycerate kinase family. As to quaternary structure, monomer.

It localises to the cytoplasm. It carries out the reaction (2R)-3-phosphoglycerate + ATP = (2R)-3-phospho-glyceroyl phosphate + ADP. It participates in carbohydrate degradation; glycolysis; pyruvate from D-glyceraldehyde 3-phosphate: step 2/5. The sequence is that of Phosphoglycerate kinase from Desulfosudis oleivorans (strain DSM 6200 / JCM 39069 / Hxd3) (Desulfococcus oleovorans).